A 352-amino-acid polypeptide reads, in one-letter code: C5a anaphylatoxin chemotactic receptor 1 (352 aa).

At 1–38 (MASMNFSPPEYPDYGTATLDPNIFVDESLNTPKLSVPD) the chain is on the extracellular side. Residues Y11 and Y14 each carry the sulfotyrosine modification. A helical membrane pass occupies residues 39-65 (MIALVIFVMVFLVGVPGNFLVVWVTGF). Residues 66–70 (EVRRT) lie on the Cytoplasmic side of the membrane. Residues 71–94 (INAIWFLNLAVADLLSCLALPILF) traverse the membrane as a helical segment. Topologically, residues 95 to 111 (SSIVQQGYWPFGNAACR) are extracellular. C110 and C189 are joined by a disulfide. Residues 112 to 133 (ILPSLILLNMYASILLLTTISA) form a helical membrane-spanning segment. Over 134 to 154 (DRFVLVFNPIWCQNYRGPQLA) the chain is Cytoplasmic. Residues 155–175 (WAACSVAWAVALLLTVPSFIF) traverse the membrane as a helical segment. The Extracellular portion of the chain corresponds to 176–202 (RGVHTEYFPFWMTCGVDYSGVGVLVER). The helical transmembrane segment at 203-228 (GVAILRLLMGFLGPLVILSICYTFLL) threads the bilayer. Residues 229–244 (IRTWSRKATRSTKTLK) lie on the Cytoplasmic side of the membrane. Residues 245-267 (VVVAVVVSFFVLWLPYQVTGMMM) traverse the membrane as a helical segment. At 268–284 (ALFYKHSESFRRVSRLD) the chain is on the extracellular side. The helical transmembrane segment at 285-305 (SLCVAVAYINCCINPIIYVLA) threads the bilayer. The Cytoplasmic segment spans residues 306–352 (AQGFHSRFLKSLPARLRQVLAEESVGRDSKSITLSTVDTPAQKSQGV). 5 positions are modified to phosphoserine: S316, S329, S334, S336, and S340.

Belongs to the G-protein coupled receptor 1 family. As to quaternary structure, homodimer. May also form higher-order oligomers. Interacts (when phosphorylated) with ARRB1 and ARRB2; the interaction is associated with internalization of C5aR. In terms of processing, sulfation plays a critical role in the association of C5aR with C5a, but no significant role in the ability of the receptor to transduce a signal and mobilize calcium in response to a small peptide agonist. Phosphorylated on serine residues in response to C5a binding, resulting in internalization of the receptor and short-term desensitization to C5a.

Its subcellular location is the cell membrane. It is found in the cytoplasmic vesicle. In terms of biological role, receptor for the chemotactic and inflammatory peptide anaphylatoxin C5a. The ligand interacts with at least two sites on the receptor: a high-affinity site on the extracellular N-terminus, and a second site in the transmembrane region which activates downstream signaling events. Receptor activation stimulates chemotaxis, granule enzyme release, intracellular calcium release and superoxide anion production. This chain is C5a anaphylatoxin chemotactic receptor 1 (C5AR1), found in Canis lupus familiaris (Dog).